Consider the following 436-residue polypeptide: RNA-binding motif, single-stranded-interacting protein 3 (436 aa).

The interval 28 to 56 (APAPHPMAPPSPSTNSSSNNSSNNSSGEQ) is disordered. Residues 30-39 (APHPMAPPSP) show a composition bias toward pro residues. The segment covering 40–53 (STNSSSNNSSNNSS) has biased composition (low complexity). RRM domains are found at residues 60-133 (TNLY…MAKQ) and 139-224 (TNLY…FADG). Polar residues predominate over residues 398 to 421 (TSPQTVAPSSQDTSGQQQQIAVDT). Residues 398 to 436 (TSPQTVAPSSQDTSGQQQQIAVDTSNEHAPAYSYQQSKP) are disordered.

The protein resides in the cytoplasm. Functionally, binds poly(A) and poly(U) oligoribonucleotides. This is RNA-binding motif, single-stranded-interacting protein 3 (RBMS3) from Pongo abelii (Sumatran orangutan).